The following is a 183-amino-acid chain: Phosphinothricin N-acetyltransferase (183 aa).

The 162-residue stretch at 8-169 folds into the N-acetyltransferase domain; the sequence is VEIRPATAAD…DVGFWQRDFE (162 aa). Acetyl-CoA-binding positions include 91–93, 99–104, and Asn-130; these read VYV and RLGLGS.

The protein belongs to the acetyltransferase family. PAT/BAR subfamily.

It carries out the reaction phosphinothricin + acetyl-CoA = N-acetylphosphinothricin + CoA + H(+). Inactivates phosphinothricin (PPT) by transfer of an acetyl group from acetyl CoA. This enzyme is an effector of phosphinothricin tripeptide (PTT or bialaphos) resistance. The sequence is that of Phosphinothricin N-acetyltransferase from Streptomyces viridochromogenes (strain DSM 40736 / JCM 4977 / BCRC 1201 / Tue 494).